The sequence spans 279 residues: Undecaprenyl-diphosphatase (279 aa).

The next 8 helical transmembrane spans lie at 2–22 (LFIE…TEWL), 44–64 (AFME…VIVI), 85–105 (WQLW…AVPL), 113–133 (FNHM…FLWI), 163–183 (VLSI…AIIL), 188–208 (TVAA…YSGL), 225–245 (LLVL…VIKL), and 255–275 (FTVF…YSVF).

This sequence belongs to the UppP family.

It is found in the cell membrane. It catalyses the reaction di-trans,octa-cis-undecaprenyl diphosphate + H2O = di-trans,octa-cis-undecaprenyl phosphate + phosphate + H(+). Functionally, catalyzes the dephosphorylation of undecaprenyl diphosphate (UPP). Confers resistance to bacitracin. This chain is Undecaprenyl-diphosphatase, found in Streptococcus equi subsp. equi (strain 4047).